A 110-amino-acid chain; its full sequence is Large ribosomal subunit protein uL22 (110 aa).

This sequence belongs to the universal ribosomal protein uL22 family. Part of the 50S ribosomal subunit.

Functionally, this protein binds specifically to 23S rRNA; its binding is stimulated by other ribosomal proteins, e.g. L4, L17, and L20. It is important during the early stages of 50S assembly. It makes multiple contacts with different domains of the 23S rRNA in the assembled 50S subunit and ribosome. In terms of biological role, the globular domain of the protein is located near the polypeptide exit tunnel on the outside of the subunit, while an extended beta-hairpin is found that lines the wall of the exit tunnel in the center of the 70S ribosome. This Janthinobacterium sp. (strain Marseille) (Minibacterium massiliensis) protein is Large ribosomal subunit protein uL22.